The sequence spans 1132 residues: Protein CROWDED NUCLEI 1 (1132 aa).

The interval Met-1 to Leu-31 is disordered. The segment covering Arg-10–Gly-28 has biased composition (polar residues). The stretch at Leu-73 to Phe-714 forms a coiled coil. Short sequence motifs (nuclear localization signal) lie at residues Glu-379–Lys-386 and Ile-693–Leu-700. Residues Ser-774 and Ser-803 each carry the phosphoserine modification. Residues Ala-849–Glu-859 show a composition bias toward basic and acidic residues. 4 disordered regions span residues Ala-849–Asp-871, Ser-883–Val-909, Ile-924–Glu-1039, and Gly-1061–Thr-1132. A compositionally biased stretch (polar residues) spans Thr-861–Asp-871. Phosphoserine is present on residues Ser-865 and Ser-883. A compositionally biased stretch (basic residues) spans Met-895–Arg-907. A Phosphoserine modification is found at Ser-908. Residues Ser-1093, Ser-1105, and Ser-1112 each carry the phosphoserine modification. Residues Asp-1095 to Ser-1105 are compositionally biased toward basic and acidic residues.

This sequence belongs to the CRWN family. Core component of the LINC complex which is composed of inner nuclear membrane SUN domain-containing proteins coupled to outer nuclear membrane WIP and WIT proteins. The LINC complex also involves nucleoskeletal proteins CRWN/LINC and possibly KAKU4 and the cytoskeletal myosin KAKU1. Interacts with SUN1 and SUN2. Binds to KAKU4. Expressed at low levels in roots, leaves, flowers and flower stalks.

The protein localises to the nucleus membrane. Its subcellular location is the nucleus. It is found in the nucleoplasm. The protein resides in the nucleus lamina. Its function is as follows. Component of SUN-protein-containing multivariate complexes also called LINC complexes which link the nucleoskeleton and cytoskeleton by providing versatile outer nuclear membrane attachment sites for cytoskeletal filaments. Required for nucleus structure organization (e.g. size and shape). In Arabidopsis thaliana (Mouse-ear cress), this protein is Protein CROWDED NUCLEI 1.